The following is a 333-amino-acid chain: Isopenicillin N synthase (333 aa).

Isopenicillin N contacts are provided by arginine 87, tyrosine 91, and tyrosine 191. 5 residues coordinate N-[(5S)-5-amino-5-carboxypentanoyl]-L-cysteinyl-D-valine: arginine 87, tyrosine 91, tyrosine 191, histidine 216, and aspartate 218. In terms of domain architecture, Fe2OG dioxygenase spans 180–290 (DTLSCRSLMI…RLSLPFFLHA (111 aa)). Fe(2+) is bound by residues histidine 216, aspartate 218, and histidine 272. Arginine 281 contributes to the 2-oxoglutarate binding site. Isopenicillin N is bound at residue serine 283. Position 283 (serine 283) interacts with N-[(5S)-5-amino-5-carboxypentanoyl]-L-cysteinyl-D-valine.

Belongs to the iron/ascorbate-dependent oxidoreductase family. Requires Fe cation as cofactor. It depends on L-ascorbate as a cofactor.

The enzyme catalyses N-[(5S)-5-amino-5-carboxypentanoyl]-L-cysteinyl-D-valine + O2 = isopenicillin N + 2 H2O. The protein operates within antibiotic biosynthesis; penicillin G biosynthesis; penicillin G from L-alpha-aminoadipate and L-cysteine and L-valine: step 2/3. Its function is as follows. Removes, in the presence of oxygen, 4 hydrogen atoms from delta-L-(alpha-aminoadipyl)-L-cysteinyl-D-valine (ACV) to form the azetidinone and thiazolidine rings of isopenicillin. This chain is Isopenicillin N synthase (pcbC), found in Streptomyces microflavus (Streptomyces lipmanii).